Reading from the N-terminus, the 117-residue chain is Large ribosomal subunit protein bL20 (117 aa).

The protein belongs to the bacterial ribosomal protein bL20 family.

In terms of biological role, binds directly to 23S ribosomal RNA and is necessary for the in vitro assembly process of the 50S ribosomal subunit. It is not involved in the protein synthesizing functions of that subunit. The sequence is that of Large ribosomal subunit protein bL20 from Rickettsia bellii (strain OSU 85-389).